Here is a 250-residue protein sequence, read N- to C-terminus: uncharacterized protein (250 aa).

Residue lysine 17 forms a Glycyl lysine isopeptide (Lys-Gly) (interchain with G-Cter in ubiquitin) linkage. Positions 30–67 (REEDYVATSKDNIHHHPCDWSAKPSQRQNENEQKSTIR) are disordered.

This is an uncharacterized protein from Saccharomyces cerevisiae (strain ATCC 204508 / S288c) (Baker's yeast).